The primary structure comprises 95 residues: Large ribosomal subunit protein bL27 (95 aa).

A propeptide spanning residues 1–10 (MLLTMNLQLF) is cleaved from the precursor. Residues 12 to 38 (HKKGGGSTSNGRDSESKRLGAKSADGQ) form a disordered region.

The protein belongs to the bacterial ribosomal protein bL27 family. The N-terminus is cleaved by ribosomal processing cysteine protease Prp.

The polypeptide is Large ribosomal subunit protein bL27 (Enterococcus faecalis (strain ATCC 700802 / V583)).